The primary structure comprises 299 residues: MLFDQIASNKRKTWILLLVFFLLLALVGYAVGYLFIRSGLGGLVIALIIGFIYALSMIFQSTEIVMSMNGAREVDEQTAPDLYHVVEDMALVAQIPMPRVFIIDDPALNAFATGSNPQNAAVAATSGLLAIMNREELEAVMGHEVSHIRNYDIRISTIAVALASAITMLSGMAGRMMWWGGAGRRRSDDDRDGNGLEIIMLVVSLLAIVLAPLAATLVQLAISRQREFLADASSVELTRNPQGMINALDKLDNSKPMSRHVDDASSALYINDPKKGGGFQKLFYTHPPISERIERLKQM.

2 consecutive transmembrane segments (helical) span residues 15–35 and 39–59; these read ILLL…GYLF and GLGG…SMIF. H143 contributes to the Zn(2+) binding site. Residue E144 is part of the active site. H147 provides a ligand contact to Zn(2+). 2 consecutive transmembrane segments (helical) span residues 158–178 and 198–218; these read IAVA…RMMW and IIML…ATLV. E227 is a Zn(2+) binding site.

This sequence belongs to the peptidase M48B family. Requires Zn(2+) as cofactor.

The protein localises to the cell membrane. This is Protease HtpX homolog from Streptococcus pneumoniae (strain P1031).